Here is an 82-residue protein sequence, read N- to C-terminus: ATP synthase subunit c, chloroplastic (82 aa).

The next 2 membrane-spanning stretches (helical) occupy residues 3–23 (PLISAASVLAAGLAVGLASIG) and 57–77 (FAFMESLTIYGLVVALALLFA).

It belongs to the ATPase C chain family. In terms of assembly, F-type ATPases have 2 components, F(1) - the catalytic core - and F(0) - the membrane proton channel. F(1) has five subunits: alpha(3), beta(3), gamma(1), delta(1), epsilon(1). F(0) has four main subunits: a(1), b(1), b'(1) and c(10-14). The alpha and beta chains form an alternating ring which encloses part of the gamma chain. F(1) is attached to F(0) by a central stalk formed by the gamma and epsilon chains, while a peripheral stalk is formed by the delta, b and b' chains.

It is found in the plastid. The protein localises to the chloroplast thylakoid membrane. F(1)F(0) ATP synthase produces ATP from ADP in the presence of a proton or sodium gradient. F-type ATPases consist of two structural domains, F(1) containing the extramembraneous catalytic core and F(0) containing the membrane proton channel, linked together by a central stalk and a peripheral stalk. During catalysis, ATP synthesis in the catalytic domain of F(1) is coupled via a rotary mechanism of the central stalk subunits to proton translocation. Functionally, key component of the F(0) channel; it plays a direct role in translocation across the membrane. A homomeric c-ring of between 10-14 subunits forms the central stalk rotor element with the F(1) delta and epsilon subunits. This chain is ATP synthase subunit c, chloroplastic, found in Mesostigma viride (Green alga).